Here is a 91-residue protein sequence, read N- to C-terminus: Co-chaperonin GroES (91 aa).

The protein belongs to the GroES chaperonin family. In terms of assembly, heptamer of 7 subunits arranged in a ring. Interacts with the chaperonin GroEL.

It is found in the cytoplasm. In terms of biological role, together with the chaperonin GroEL, plays an essential role in assisting protein folding. The GroEL-GroES system forms a nano-cage that allows encapsulation of the non-native substrate proteins and provides a physical environment optimized to promote and accelerate protein folding. GroES binds to the apical surface of the GroEL ring, thereby capping the opening of the GroEL channel. This chain is Co-chaperonin GroES, found in Oenococcus oeni (strain ATCC BAA-331 / PSU-1).